We begin with the raw amino-acid sequence, 344 residues long: Protein BREVIS RADIX (344 aa).

The 56-residue stretch at 139–194 (KEWMAQVEPGVHITFASLPTGGNDLKRIRFSREMFDKWQAQRWWGENYDKIVELYN) folds into the BRX 1 domain. Residues 203-286 (LQTPARSDDQ…DPPSMSNASE (84 aa)) form a disordered region. The span at 223–233 (DSARESKDWTP) shows a compositional bias: basic and acidic residues. Residues 248–264 (YGGSSNYGPGSYHGGPP) are compositionally biased toward low complexity. The BRX 2 domain maps to 289-344 (AEWIEEDEPGVYITIRQLSDGTRELRRVRFSRERFGEVHAKTWWEQNRERIQTQYL).

It belongs to the BRX family. Homodimer and heterodimer with BRXL1. Interacts with NGA1 and ARF5. As to expression, expressed in the developing protophloem up to the elongation zone in root meristem of young seedlings, in the columella and the phloem vasculature throughout the root and in the phloem vasculature in the shoot. Detected in the shoot meristem and in primordia. Low expression in stomata. Confined to sieve element precursor cells and to protophloem.

The protein resides in the nucleus. Its subcellular location is the cell membrane. Acts as a regulator of cell proliferation and elongation in the root and shoot. Regulates roots architecture and primary root protophloem differentiation. BRX, BAM3, and CLE45 act together to regulate the transition of protophloem cells from proliferation to differentiation, thus impinging on postembryonic growth capacity of the root meristem. Probable transcription regulator. Regulated by the auxin response factor ARF5. Polarly localized in vascular cells and subject to endocytic recycling. Required for CPD expression and for correct nuclear auxin response. Mediates cross-talk between the auxin and brassinosteroid pathways. BRX is a target for auxin-induced, proteasome-mediated degradation. This chain is Protein BREVIS RADIX, found in Arabidopsis thaliana (Mouse-ear cress).